A 713-amino-acid chain; its full sequence is MSLFNKIVKEFQWGQQKVRLETGEIARQASGAVIVDIEDTVVLATVVGAKSAKPGQDFFPLTVDYIEKTYSAGKIPGGFFRREGRPSEHETLTSRLIDRPLRPLFPEGFYNEVQVVIHVLSVNPEIPADIPALIGASAALAVSGLPFNGPVGAARVAYVNNEYVLNPTREQIKASRLDLVVAGTERAVLMVESEADQLPEDVMLGAVVFGHEQMQTAIDAIHELVREGGKPEWDWQPAPKDEALNARVTELAQPELLAAYQIRDKQARLTKLKEVYAATSAKLEEEAVAAGTVAADKATVGNILFDLEAKIVRGQILNGEPRIDGRDTRTVRPIEIRTGVLPRTHGSALFTRGETQALVVATLGTKGDEQIIDALEGEYRERFMLHYNMPPFATGETGRVGSPKRREIGHGRLAKRALVACLPSADEFGYSIRVVSEITESNGSSSMASVCGGCLALMDAGVPMKAHVAGIAMGLILEGNKFAVLTDILGDEDHLGDMDFKVAGTADGVTALQMDIKIQGITKEIMQVALAQAKEGRMHILGKMKDAVAGANTQLSEFAPRMITIKINPEKIRDVIGKGGSVIRALTEETGTTIDISDDGVVTIASTNSEGMAEAKKRIENITAEIEVGHVYEGTVLKLLDFGAIVNLLPGKDGLLHISEIVNERVKDINDYLKEGQQVKVKVIQTDEKGRVRLSAKALLNEAAAQADTPPQQ.

The Mg(2+) site is built by aspartate 493 and aspartate 499. One can recognise a KH domain in the interval 560–619 (PRMITIKINPEKIRDVIGKGGSVIRALTEETGTTIDISDDGVVTIASTNSEGMAEAKKRI). The S1 motif domain maps to 629–697 (GHVYEGTVLK…EKGRVRLSAK (69 aa)).

This sequence belongs to the polyribonucleotide nucleotidyltransferase family. The cofactor is Mg(2+).

It localises to the cytoplasm. It carries out the reaction RNA(n+1) + phosphate = RNA(n) + a ribonucleoside 5'-diphosphate. Its function is as follows. Involved in mRNA degradation. Catalyzes the phosphorolysis of single-stranded polyribonucleotides processively in the 3'- to 5'-direction. The protein is Polyribonucleotide nucleotidyltransferase of Burkholderia mallei (strain NCTC 10247).